A 211-amino-acid polypeptide reads, in one-letter code: uncharacterized protein (211 aa).

His-54, His-56, Asp-58, His-59, His-129, Asp-148, and His-189 together coordinate Zn(2+).

This sequence belongs to the metallo-beta-lactamase superfamily. Glyoxalase II family. Requires Zn(2+) as cofactor.

This is an uncharacterized protein from Aquifex aeolicus (strain VF5).